The primary structure comprises 481 residues: Aspartyl/glutamyl-tRNA(Asn/Gln) amidotransferase subunit B (481 aa).

The protein belongs to the GatB/GatE family. GatB subfamily. As to quaternary structure, heterotrimer of A, B and C subunits.

The catalysed reaction is L-glutamyl-tRNA(Gln) + L-glutamine + ATP + H2O = L-glutaminyl-tRNA(Gln) + L-glutamate + ADP + phosphate + H(+). The enzyme catalyses L-aspartyl-tRNA(Asn) + L-glutamine + ATP + H2O = L-asparaginyl-tRNA(Asn) + L-glutamate + ADP + phosphate + 2 H(+). In terms of biological role, allows the formation of correctly charged Asn-tRNA(Asn) or Gln-tRNA(Gln) through the transamidation of misacylated Asp-tRNA(Asn) or Glu-tRNA(Gln) in organisms which lack either or both of asparaginyl-tRNA or glutaminyl-tRNA synthetases. The reaction takes place in the presence of glutamine and ATP through an activated phospho-Asp-tRNA(Asn) or phospho-Glu-tRNA(Gln). This chain is Aspartyl/glutamyl-tRNA(Asn/Gln) amidotransferase subunit B, found in Marinomonas sp. (strain MWYL1).